Reading from the N-terminus, the 315-residue chain is Homoserine O-succinyltransferase (315 aa).

The active-site Acyl-thioester intermediate is Cys142. The substrate site is built by Lys163 and Ser192. The active-site Proton acceptor is His235. Glu237 is an active-site residue. A substrate-binding site is contributed by Arg249.

It belongs to the MetA family.

The protein localises to the cytoplasm. The enzyme catalyses L-homoserine + succinyl-CoA = O-succinyl-L-homoserine + CoA. The protein operates within amino-acid biosynthesis; L-methionine biosynthesis via de novo pathway; O-succinyl-L-homoserine from L-homoserine: step 1/1. Its function is as follows. Transfers a succinyl group from succinyl-CoA to L-homoserine, forming succinyl-L-homoserine. In Shewanella piezotolerans (strain WP3 / JCM 13877), this protein is Homoserine O-succinyltransferase.